The primary structure comprises 407 residues: D-galactonate dehydratase family member Pjdr2_1176 (407 aa).

Position 208 (Asp208) interacts with Mg(2+). His210 serves as a coordination point for D-arabinonate. Glu234 and Glu260 together coordinate Mg(2+). Residues Glu260, Arg281, and Glu337 each contribute to the D-arabinonate site.

Belongs to the mandelate racemase/muconate lactonizing enzyme family. GalD subfamily.

Its function is as follows. Has no detectable activity with D-mannonate and with a panel of 70 other acid sugars (in vitro), in spite of the conservation of the residues that are expected to be important for catalytic activity and cofactor binding. May have evolved a divergent function. The polypeptide is D-galactonate dehydratase family member Pjdr2_1176 (Paenibacillus sp. (strain JDR-2)).